Reading from the N-terminus, the 311-residue chain is Glycine--tRNA ligase alpha subunit (311 aa).

Belongs to the class-II aminoacyl-tRNA synthetase family. In terms of assembly, tetramer of two alpha and two beta subunits.

The protein resides in the cytoplasm. The enzyme catalyses tRNA(Gly) + glycine + ATP = glycyl-tRNA(Gly) + AMP + diphosphate. The polypeptide is Glycine--tRNA ligase alpha subunit (Bradyrhizobium diazoefficiens (strain JCM 10833 / BCRC 13528 / IAM 13628 / NBRC 14792 / USDA 110)).